Here is a 1001-residue protein sequence, read N- to C-terminus: Ankyrin repeat domain-containing protein 35 (1001 aa).

ANK repeat units lie at residues 53–82 (NGQSPFHLAASKGLTECLTILLANGADINS), 86–115 (DGSTALHLATISCQPQCVKVLLQHGANEDA), 119–148 (ENRSPLHWAASSGCASSVLLLCDHEAFLDV), 152–181 (DGRTPLMIASLGGHAAICSQLLQRGARVNV), 185–214 (NDKSALILACEKGSAEVAELLLSHGADAGA), and 218–247 (TGHDALHYALHTQDKALWRHLQQALSRRRR). Disordered regions lie at residues 256 to 296 (PDLA…PCSE), 352 to 482 (PRAS…VAEP), and 559 to 601 (PEVP…ALGG). Over residues 281–295 (PEEEQEEKEDEDPCS) the composition is skewed to acidic residues. Residues 295–344 (SEEWRWKYEEERRKVVRLEQELVQKTEECKTQAAAYLDLENQIREQAQEL) are a coiled coil. A compositionally biased stretch (basic and acidic residues) spans 402–422 (KKAEDSAPGKIQYEVHGRSQP). The span at 423 to 434 (EEQGPPQSPASE) shows a compositional bias: low complexity. Residues 440–450 (TGQQLTTNGAQ) are compositionally biased toward polar residues. The span at 579-588 (KQDEEKEKRV) shows a compositional bias: basic and acidic residues. 3 coiled-coil regions span residues 610-696 (KGQL…LLAS), 733-810 (ISTL…IGKL), and 851-968 (QELK…HEEI). Residues 879 to 902 (RRSGDLAAQAAEQERQASEMRGRS) are disordered. Residues 890 to 902 (EQERQASEMRGRS) show a composition bias toward basic and acidic residues.

This chain is Ankyrin repeat domain-containing protein 35 (ANKRD35), found in Homo sapiens (Human).